Reading from the N-terminus, the 199-residue chain is A-type ATP synthase subunit E (199 aa).

The protein belongs to the V-ATPase E subunit family. As to quaternary structure, has multiple subunits with at least A(3), B(3), C, D, E, F, H, I and proteolipid K(x).

Its subcellular location is the cell membrane. Component of the A-type ATP synthase that produces ATP from ADP in the presence of a proton gradient across the membrane. This Pyrococcus abyssi (strain GE5 / Orsay) protein is A-type ATP synthase subunit E.